A 128-amino-acid chain; its full sequence is Glycine cleavage system H protein (128 aa).

A Lipoyl-binding domain is found at 23–105; sequence IGIVGITWFA…YGEGWILKLE (83 aa). The residue at position 64 (Lys-64) is an N6-lipoyllysine.

Belongs to the GcvH family. As to quaternary structure, the glycine cleavage system is composed of four proteins: P, T, L and H. Requires (R)-lipoate as cofactor.

Its function is as follows. The glycine cleavage system catalyzes the degradation of glycine. The H protein shuttles the methylamine group of glycine from the P protein to the T protein. This is Glycine cleavage system H protein from Symbiobacterium thermophilum (strain DSM 24528 / JCM 14929 / IAM 14863 / T).